An 83-amino-acid polypeptide reads, in one-letter code: Normal mucosa of esophagus-specific gene 1 protein (83 aa).

It belongs to the complex I NDUFA4 subunit family.

The protein localises to the nucleus. This chain is Normal mucosa of esophagus-specific gene 1 protein (Nmes1), found in Rattus norvegicus (Rat).